A 469-amino-acid polypeptide reads, in one-letter code: Glutamine synthetase (469 aa).

Residues E15–T96 enclose the GS beta-grasp domain. Positions P104–V469 constitute a GS catalytic domain. Residues E129 and E131 each coordinate Mg(2+). E205 is a binding site for ATP. 2 residues coordinate Mg(2+): E210 and E218. Y221 to F223 contacts ATP. Residues N262 to G263 and G263 contribute to the L-glutamate site. Mg(2+) is bound at residue H267. ATP is bound by residues H269–S271 and S271. Residues R320, E326, and R338 each coordinate L-glutamate. ATP is bound by residues R338, R343, and K352. E357 provides a ligand contact to Mg(2+). R359 provides a ligand contact to L-glutamate. An O-AMP-tyrosine modification is found at Y397.

Belongs to the glutamine synthetase family. As to quaternary structure, oligomer of 12 subunits arranged in the form of two hexagons. Requires Mg(2+) as cofactor.

The protein localises to the cytoplasm. The catalysed reaction is L-glutamate + NH4(+) + ATP = L-glutamine + ADP + phosphate + H(+). With respect to regulation, the activity of this enzyme could be controlled by adenylation under conditions of abundant glutamine. Functionally, catalyzes the ATP-dependent biosynthesis of glutamine from glutamate and ammonia. In Streptomyces viridochromogenes, this protein is Glutamine synthetase.